The chain runs to 261 residues: Succinate dehydrogenase [ubiquinone] iron-sulfur subunit, mitochondrial (261 aa).

The 2Fe-2S ferredoxin-type domain maps to 31-122; it reads FKIYRWNPDT…DVKIYPLPHM (92 aa). The [2Fe-2S] cluster site is built by C82, C87, C90, and C102. A 4Fe-4S ferredoxin-type domain is found at 164 to 194; it reads DRKKLDGLYECILCACCSTACPSYWWNNEQY. Residues C174, C177, and C180 each coordinate [4Fe-4S] cluster. Position 184 (C184) interacts with [3Fe-4S] cluster. W189 lines the a ubiquinone pocket. Positions 231 and 237 each coordinate [3Fe-4S] cluster. A [4Fe-4S] cluster-binding site is contributed by C241.

Belongs to the succinate dehydrogenase/fumarate reductase iron-sulfur protein family. In terms of assembly, component of complex II composed of four subunits: a flavoprotein (FP), an iron-sulfur protein (IP), and a cytochrome b composed of a large and a small subunit. [2Fe-2S] cluster serves as cofactor. [3Fe-4S] cluster is required as a cofactor. The cofactor is [4Fe-4S] cluster.

It is found in the mitochondrion inner membrane. The enzyme catalyses a quinone + succinate = fumarate + a quinol. Its pathway is carbohydrate metabolism; tricarboxylic acid cycle; fumarate from succinate (eukaryal route): step 1/1. Its function is as follows. Iron-sulfur protein (IP) subunit of succinate dehydrogenase (SDH) that is involved in complex II of the mitochondrial electron transport chain and is responsible for transferring electrons from succinate to ubiquinone (coenzyme Q). This Eremothecium gossypii (strain ATCC 10895 / CBS 109.51 / FGSC 9923 / NRRL Y-1056) (Yeast) protein is Succinate dehydrogenase [ubiquinone] iron-sulfur subunit, mitochondrial (SDH2).